The primary structure comprises 269 residues: Zinc import ATP-binding protein ZnuC (269 aa).

One can recognise an ABC transporter domain in the interval V6 to D221. An ATP-binding site is contributed by G38–T45.

It belongs to the ABC transporter superfamily. Zinc importer (TC 3.A.1.15.5) family. In terms of assembly, the complex is composed of two ATP-binding proteins (ZnuC), two transmembrane proteins (ZnuB) and a solute-binding protein (ZnuA).

It is found in the cell inner membrane. The catalysed reaction is Zn(2+)(out) + ATP(in) + H2O(in) = Zn(2+)(in) + ADP(in) + phosphate(in) + H(+)(in). Part of the ABC transporter complex ZnuABC involved in zinc import. Responsible for energy coupling to the transport system. This Pseudomonas aeruginosa (strain UCBPP-PA14) protein is Zinc import ATP-binding protein ZnuC.